A 778-amino-acid polypeptide reads, in one-letter code: Actin-binding LIM protein 1 (778 aa).

LIM zinc-binding domains lie at 97-156 (IHCH…MYGT), 156-216 (TRCH…MSSS), 224-283 (SNCA…LFGV), and 283-343 (VKCE…TKTE). S216 is modified (phosphoserine). Residues 339–370 (STKTEEKLRPTRTSSESIYSRPGSSIPGSPGH) form a disordered region. Positions 360–369 (PGSSIPGSPG) are enriched in low complexity. Position 367 is a phosphoserine (S367). Y373 and Y396 each carry phosphotyrosine. Disordered stretches follow at residues 414-510 (YDDK…QAPK) and 552-597 (AAQA…EELL). Phosphoserine occurs at positions 422, 426, and 431. Residues 423 to 434 (LGESPRTLSPTP) show a composition bias toward polar residues. T433 bears the Phosphothreonine mark. At S435 the chain carries Phosphoserine. Residue Y439 is modified to Phosphotyrosine. Residues 449-474 (RSTSQGSINSPVYSRHSYTPTTSRSP) are compositionally biased toward polar residues. Phosphoserine occurs at positions 452, 455, 458, 498, and 587. Positions 590 to 614 (EEDDEELLRRRQLQEEQLMKLNSGL) form a coiled coil. Residue K620 forms a Glycyl lysine isopeptide (Lys-Gly) (interchain with G-Cter in SUMO2) linkage. 4 positions are modified to phosphoserine: S640, S655, S677, and S706. The region spanning 710 to 778 (MLEPKIFPYE…NDMKKKAKLF (69 aa)) is the HP domain.

In terms of assembly, binds F-actin. Interacts with ABRA. In terms of tissue distribution, detected in liver, heart, skeletal muscle, brain and retina, where it is concentrated in the inner segment and in the outer plexiform layers.

The protein localises to the cytoplasm. Its subcellular location is the cytoskeleton. Functionally, may act as scaffold protein. May play a role in the development of the retina. Has been suggested to play a role in axon guidance. The sequence is that of Actin-binding LIM protein 1 (ABLIM1) from Homo sapiens (Human).